We begin with the raw amino-acid sequence, 102 residues long: Large ribosomal subunit protein uL24 (102 aa).

It belongs to the universal ribosomal protein uL24 family. As to quaternary structure, part of the 50S ribosomal subunit.

In terms of biological role, one of two assembly initiator proteins, it binds directly to the 5'-end of the 23S rRNA, where it nucleates assembly of the 50S subunit. Functionally, one of the proteins that surrounds the polypeptide exit tunnel on the outside of the subunit. The polypeptide is Large ribosomal subunit protein uL24 (Ralstonia nicotianae (strain ATCC BAA-1114 / GMI1000) (Ralstonia solanacearum)).